A 332-amino-acid chain; its full sequence is Melanocortin receptor 4 (332 aa).

Over 1 to 43 (MNSTQPLGMHTSLHSWNRSAHGMPTNVSESLAKGYSDGGCYEQ) the chain is Extracellular. N-linked (GlcNAc...) asparagine glycosylation is found at N2, N17, and N26. Intrachain disulfides connect C40-C279 and C271-C277. Residues 44–69 (LFVSPEVFVTLGVISLLENILVIVAI) form a helical membrane-spanning segment. Residues 70 to 81 (AKNKNLHSPMYF) lie on the Cytoplasmic side of the membrane. The chain crosses the membrane as a helical span at residues 82–106 (FICSLAVADMLVSVSNGSETIVITL). Residues E100, D122, and D126 each coordinate Ca(2+). Residues 107–123 (LNSTDTDAQSFTVDIDN) are Extracellular-facing. Residues 124–145 (VIDSVICSSLLASICSLLSIAV) traverse the membrane as a helical segment. Over 146–165 (DRYFTIFYALQYHNIMTVKR) the chain is Cytoplasmic. Residues 166 to 186 (VAITISAIWAACTVSGVLFII) form a helical membrane-spanning segment. Over 187 to 191 (YSDSS) the chain is Extracellular. Residues 192–215 (AVIICLITVFFTMLALMASLYVHM) form a helical membrane-spanning segment. The Cytoplasmic portion of the chain corresponds to 216–248 (FLMARLHIKRIAVLPGSGTIRQGANMKGAITLT). The chain crosses the membrane as a helical span at residues 249 to 271 (ILIGVFVVCWAPFFLHLIFYISC). Over 272–280 (PQNPYCVCF) the chain is Extracellular. A helical transmembrane segment spans residues 281 to 304 (MSHFNLYLILIMCNSIIDPLIYAL). Over 305 to 332 (RSQELRKTFKEIICCSPLGGLCDLSSRY) the chain is Cytoplasmic. A lipid anchor (S-palmitoyl cysteine) is attached at C318.

This sequence belongs to the G-protein coupled receptor 1 family. As to quaternary structure, homodimer; disulfide-linked, also forms higher order oligomers. Interacts with GNAS. Interacts with ATRNL1. Interacts with MGRN1; this interaction competes with GNAS-binding and thus inhibits agonist-induced cAMP production. Interacts with MRAP and MRAP2; these associated factors increase ligand-sensitivity and generation of cAMP.

It localises to the cell membrane. In terms of biological role, hormone receptor that acts as a key component of the leptin-melanocortin pathway at the intersection of homeostatic maintenance of energetic state. Plays a role in regulating food intake: activation by a stimulating hormone such as anorexigenic alpha-melanocyte stimulating hormone (alpha-MSH) inhibits appetite, whereas binding to a natural antagonist like Agouti-related protein/AGRP promotes appetite. G-protein-coupled receptor that activates conventional Galphas signaling leading to induction of anorexogenic signaling in the hypothalamus to result in negative energy balance. Regulates the firing activity of neurons from the hypothalamus by alpha-MSH and AGRP independently of Galphas signaling by ligand-induced coupling of closure of inwardly rectifying potassium channel KCNJ13. In intestinal epithelial cells, plays a role in the inhibition of hepatic glucose production via nesfatin-1/NUCB2 leading to increased cyclic adenosine monophosphate (cAMP) levels and glucagon-like peptide 1 (GLP-1) secretion in the intestinal epithelium. The polypeptide is Melanocortin receptor 4 (MC4R) (Bos taurus (Bovine)).